The primary structure comprises 493 residues: MAVLGITIALLVWVATLLVISIWKQIYNSWNLPPGPFPLPILGNIFQLDLKDIPKSFTKLAKRFGPVFTLHLGSRRIVVLHGYKAVKEVLLNHKNEFSGRGDIPVFQEYKNKGIIFNNGPTWKDVRRFSLSILRDWGMGKQGNEARIQREAQFLVEELKKTKGQPFDPTFLIGCAPCNVIADILFNKRFDYNDKKCLRLMSLFNENFYLLSTPWIQLYNNFADYLRYLPGSHRKIMKNVSEIKQYTLEKAKEHLQSLDINCARDVTDCLLIEMEKEKHSQEPMYTMENVSVTLADLFFAGTETTSTTLRYGLLILMKYPEIEEKLHEEIDRVIGPSRVPAVRDRLDMPYMDAVVHEIQRFINLVPSNLPHEATRDTVFQGYVIPKGTVVIPTLDSLLYDSHEFPDPEKFKPEHFLNENGKFKYSDYFKAFSAGKRVCVGEGLARMELFLLLSAILQHFNLKSLVDPKDIDLSPVTVGFGSIPPQFKLCVIPRS.

298 to 303 contributes to the substrate binding site; it reads FAGTET. Residue cysteine 437 participates in heme binding.

It belongs to the cytochrome P450 family. Interacts with chaperones HSP70 and HSP90; this interaction is required for initial targeting to mitochondria. Heme is required as a cofactor.

The protein resides in the endoplasmic reticulum membrane. The protein localises to the microsome membrane. Its subcellular location is the mitochondrion inner membrane. It catalyses the reaction an organic molecule + reduced [NADPH--hemoprotein reductase] + O2 = an alcohol + oxidized [NADPH--hemoprotein reductase] + H2O + H(+). The catalysed reaction is (5Z,8Z,11Z)-eicosatrienoate + reduced [NADPH--hemoprotein reductase] + O2 = 19-hydroxy-(5Z,8Z,11Z)-eicosatrienoate + oxidized [NADPH--hemoprotein reductase] + H2O + H(+). It carries out the reaction (5Z,8Z,11Z,14Z,17Z)-eicosapentaenoate + reduced [NADPH--hemoprotein reductase] + O2 = 19-hydroxy-(5Z,8Z,11Z,14Z,17Z)-eicosapentaenoate + oxidized [NADPH--hemoprotein reductase] + H2O + H(+). The enzyme catalyses (4Z,7Z,10Z,13Z,16Z,19Z)-docosahexaenoate + reduced [NADPH--hemoprotein reductase] + O2 = 21-hydroxy-(4Z,7Z,10Z,13Z,16Z,19Z)-docosahexaenoate + oxidized [NADPH--hemoprotein reductase] + H2O + H(+). It catalyses the reaction dodecanoate + reduced [NADPH--hemoprotein reductase] + O2 = 11-hydroxydodecanoate + oxidized [NADPH--hemoprotein reductase] + H2O + H(+). The catalysed reaction is tetradecanoate + reduced [NADPH--hemoprotein reductase] + O2 = 13-hydroxytetradecanoate + oxidized [NADPH--hemoprotein reductase] + H2O + H(+). It carries out the reaction 4-nitrophenol + NADPH + O2 + H(+) = 4-nitrocatechol + NADP(+) + H2O. Its pathway is lipid metabolism; fatty acid metabolism. The omega-1 hydroxylase activity is stimulated by cytochrome b5. Its function is as follows. A cytochrome P450 monooxygenase involved in the metabolism of fatty acids. Mechanistically, uses molecular oxygen inserting one oxygen atom into a substrate, and reducing the second into a water molecule, with two electrons provided by NADPH via cytochrome P450 reductase (NADPH--hemoprotein reductase). Catalyzes the hydroxylation of carbon-hydrogen bonds. Hydroxylates fatty acids specifically at the omega-1 position displaying the highest catalytic activity for saturated fatty acids. May be involved in the oxidative metabolism of xenobiotics. This Rattus norvegicus (Rat) protein is Cytochrome P450 2E1.